We begin with the raw amino-acid sequence, 143 residues long: Crossover junction endodeoxyribonuclease Hjc (143 aa).

Glu12 provides a ligand contact to Mg(2+). Ser32 is a catalytic residue. Asp42 and Glu55 together coordinate Mg(2+).

The protein belongs to the Holliday junction resolvase Hjc family. As to quaternary structure, homodimer. Interacts with PCNA subunit PCNA1. Mg(2+) is required as a cofactor.

The enzyme catalyses Endonucleolytic cleavage at a junction such as a reciprocal single-stranded crossover between two homologous DNA duplexes (Holliday junction).. With respect to regulation, autoinhibits at very high concentrations, possibly because of extreme junction distortion. Inhibition (and activity at low concentrations of enzyme) is stimulated by dsDNA and Sso7d. Activity stimulated by PCNA subunit PCNA1. A structure-specific endonuclease that resolves Holliday junction (HJ) intermediates during genetic recombination; may have some degree of sequence preference in a mobile junction. Cleaves 4-way DNA junctions introducing paired nicks in opposing strands, leaving a 5'-terminal phosphate and a 3'-terminal hydroxyl group that are subsequently ligated to produce recombinant products. Can cleave all 4 strands 3 bases 3' of the junction center. Cleaves both mobile and immobile junctions. Modifies the structure of the 4-way DNA junction, a model Holliday junction structure. The protein forms multiple complexes with 4-way DNA, suggesting more than 1 homodimer can bind to each junction. This is Crossover junction endodeoxyribonuclease Hjc from Saccharolobus solfataricus (strain ATCC 35092 / DSM 1617 / JCM 11322 / P2) (Sulfolobus solfataricus).